A 548-amino-acid chain; its full sequence is Lysine--tRNA ligase (548 aa).

The 'HIGH' region motif lies at 43 to 51; that stretch reads PSGVPHLGN. The 'KMSKS' region signature appears at 308–312; the sequence is PFSSS.

It belongs to the class-I aminoacyl-tRNA synthetase family.

Its subcellular location is the cytoplasm. The catalysed reaction is tRNA(Lys) + L-lysine + ATP = L-lysyl-tRNA(Lys) + AMP + diphosphate. The protein is Lysine--tRNA ligase of Halobacterium salinarum (strain ATCC 700922 / JCM 11081 / NRC-1) (Halobacterium halobium).